Consider the following 205-residue polypeptide: Large ribosomal subunit protein uL4 (205 aa).

This sequence belongs to the universal ribosomal protein uL4 family. Part of the 50S ribosomal subunit.

Functionally, one of the primary rRNA binding proteins, this protein initially binds near the 5'-end of the 23S rRNA. It is important during the early stages of 50S assembly. It makes multiple contacts with different domains of the 23S rRNA in the assembled 50S subunit and ribosome. Its function is as follows. Forms part of the polypeptide exit tunnel. This is Large ribosomal subunit protein uL4 from Thermus thermophilus (strain ATCC BAA-163 / DSM 7039 / HB27).